The sequence spans 2359 residues: Low-reducing polyketide synthase drtA (2359 aa).

Residues 17 to 444 form the Ketosynthase family 3 (KS3) domain; the sequence is LPPIAVVSFA…GANAHVIVEE (428 aa). Catalysis depends on for beta-ketoacyl synthase activity residues Cys-190, His-327, and His-367. The tract at residues 556–868 is malonyl-CoA:ACP transacylase (MAT) domain; sequence VFTGQGSQWP…QYLAALDRGK (313 aa). Residue Ser-648 is the For malonyltransferase activity of the active site. Positions 940–1077 are N-terminal hotdog fold; sequence HELLGRKILG…GRISVRQVAA (138 aa). Residues 940-1245 are dehydratase (DH) domain; it reads HELLGRKILG…FKGLRFSELN (306 aa). The PKS/mFAS DH domain occupies 940–1250; the sequence is HELLGRKILG…FSELNMGDGV (311 aa). His-972 functions as the Proton acceptor; for dehydratase activity in the catalytic mechanism. A C-terminal hotdog fold region spans residues 1089 to 1250; it reads AYSESAEHWY…FSELNMGDGV (162 aa). Residue Asp-1153 is the Proton donor; for dehydratase activity of the active site. Positions 1659-1970 are enoyl reductase (ER) domain; the sequence is GSFDSLELYE…TGRHVGKVVV (312 aa). The segment at 1995-2172 is ketoreductase (KR) domain; it reads SYLITGGLHG…LSLDIGAVQD (178 aa). Positions 2280-2356 constitute a Carrier domain; that stretch reads ALTEAAIELF…ALCSKLITRL (77 aa). Ser-2316 is subject to O-(pantetheine 4'-phosphoryl)serine.

The protein operates within secondary metabolite biosynthesis; terpenoid biosynthesis. Low-reducing polyketide synthase; part of the gene cluster that mediates the biosynthesis of various drimane-type sesquiterpene esters, compounds that exhibit diverse biological activities and are widely present in eukaryotes. The pathway begins with the synthesis of the backbone drimenol by the terpene cyclase drtB using farnesyl pyrophosphate (FPP) as substrate. The cytochrome P450 monooxygenase drtD is then responsible for the hydroxylations at C-6, C-9 and C-12, as well as the oxidation of hydroxyl groups at C-6 and C-11 to a ketone and an aldehyde, respectively. Then, the biosynthesis can go in two directions, either the hydroxylated drimenol is further hydroxylated at C-2 and C-3 by an enzyme(s) not associated with the drt cluster, or the FAD-binding oxidoreductase drtC further oxidizes C-11 or C-12 to form the butyrolactone ring. DrtB, drtD and drtC are solely responsible for the formation of the different drimane structures observed during drimane sesquiterpenes biosynthesis. The polyketide synthase drtA synthesizes different lengths (C6 and C8) of PKS chains, which are then oxidized to varying degrees by the short-chain dehydrogenase drtF. Finally, these PKS chains are transferred onto drimane sesquiterpenes by the acyltransferase drtE, forming the sesquiterpene esters. In addition to the different fatty acyl-CoA chains produced by drtA, drtE is also able to use cinnamoyl-CoA as a substrate. This is Low-reducing polyketide synthase drtA from Aspergillus calidoustus.